The sequence spans 941 residues: UvrABC system protein A (941 aa).

31–38 (GLSGSGKS) serves as a coordination point for ATP. The segment at 253–280 (CPICGYSMRELEPRLFSFNNPAGACPTC) adopts a C4-type zinc-finger fold. 2 ABC transporter domains span residues 310-587 (WDRR…PESL) and 607-937 (ANPE…RFLK). 640 to 647 (GVSGSGKS) lines the ATP pocket. Residues 740-766 (CEACQGDGVIKVEMHFLPDIYVPCDQC) form a C4-type zinc finger.

The protein belongs to the ABC transporter superfamily. UvrA family. As to quaternary structure, forms a heterotetramer with UvrB during the search for lesions.

It localises to the cytoplasm. The UvrABC repair system catalyzes the recognition and processing of DNA lesions. UvrA is an ATPase and a DNA-binding protein. A damage recognition complex composed of 2 UvrA and 2 UvrB subunits scans DNA for abnormalities. When the presence of a lesion has been verified by UvrB, the UvrA molecules dissociate. In Salmonella typhi, this protein is UvrABC system protein A.